The sequence spans 881 residues: Alanine--tRNA ligase (881 aa).

Zn(2+) contacts are provided by H568, H572, C670, and H674.

This sequence belongs to the class-II aminoacyl-tRNA synthetase family. It depends on Zn(2+) as a cofactor.

The protein localises to the cytoplasm. It catalyses the reaction tRNA(Ala) + L-alanine + ATP = L-alanyl-tRNA(Ala) + AMP + diphosphate. In terms of biological role, catalyzes the attachment of alanine to tRNA(Ala) in a two-step reaction: alanine is first activated by ATP to form Ala-AMP and then transferred to the acceptor end of tRNA(Ala). Also edits incorrectly charged Ser-tRNA(Ala) and Gly-tRNA(Ala) via its editing domain. The sequence is that of Alanine--tRNA ligase from Clostridium acetobutylicum (strain ATCC 824 / DSM 792 / JCM 1419 / IAM 19013 / LMG 5710 / NBRC 13948 / NRRL B-527 / VKM B-1787 / 2291 / W).